The chain runs to 156 residues: 6,7-dimethyl-8-ribityllumazine synthase (156 aa).

Residues F22, 57–59 (AYE), and 81–83 (TVI) each bind 5-amino-6-(D-ribitylamino)uracil. 86–87 (GT) is a binding site for (2S)-2-hydroxy-3-oxobutyl phosphate. H89 functions as the Proton donor in the catalytic mechanism. Position 114 (F114) interacts with 5-amino-6-(D-ribitylamino)uracil. A (2S)-2-hydroxy-3-oxobutyl phosphate-binding site is contributed by R128.

It belongs to the DMRL synthase family. As to quaternary structure, forms an icosahedral capsid composed of 60 subunits, arranged as a dodecamer of pentamers.

It carries out the reaction (2S)-2-hydroxy-3-oxobutyl phosphate + 5-amino-6-(D-ribitylamino)uracil = 6,7-dimethyl-8-(1-D-ribityl)lumazine + phosphate + 2 H2O + H(+). It participates in cofactor biosynthesis; riboflavin biosynthesis; riboflavin from 2-hydroxy-3-oxobutyl phosphate and 5-amino-6-(D-ribitylamino)uracil: step 1/2. Its function is as follows. Catalyzes the formation of 6,7-dimethyl-8-ribityllumazine by condensation of 5-amino-6-(D-ribitylamino)uracil with 3,4-dihydroxy-2-butanone 4-phosphate. This is the penultimate step in the biosynthesis of riboflavin. The protein is 6,7-dimethyl-8-ribityllumazine synthase of Erwinia tasmaniensis (strain DSM 17950 / CFBP 7177 / CIP 109463 / NCPPB 4357 / Et1/99).